Reading from the N-terminus, the 286-residue chain is ATP synthase gamma chain (286 aa).

The protein belongs to the ATPase gamma chain family. F-type ATPases have 2 components, CF(1) - the catalytic core - and CF(0) - the membrane proton channel. CF(1) has five subunits: alpha(3), beta(3), gamma(1), delta(1), epsilon(1). CF(0) has three main subunits: a, b and c.

The protein resides in the cell inner membrane. Produces ATP from ADP in the presence of a proton gradient across the membrane. The gamma chain is believed to be important in regulating ATPase activity and the flow of protons through the CF(0) complex. The protein is ATP synthase gamma chain of Leptospira borgpetersenii serovar Hardjo-bovis (strain JB197).